Reading from the N-terminus, the 365-residue chain is G-protein coupled receptor 68 (365 aa).

At 1 to 12 the chain is on the extracellular side; sequence MGNITTENSSLS. N-linked (GlcNAc...) asparagine glycans are attached at residues asparagine 3 and asparagine 8. A helical transmembrane segment spans residues 13–49; it reads CPIDHTIHQTLAPVVYVTVLVVGFPANCLSLYFGYLQ. Intrachain disulfides connect cysteine 13-cysteine 258 and cysteine 94-cysteine 172. Residues 50–53 are Cytoplasmic-facing; the sequence is IKAR. The chain crosses the membrane as a helical span at residues 54 to 84; it reads NELGVYLCNLTIADLFYICSLPFWLQYVLQH. Residues 85–89 lie on the Extracellular side of the membrane; the sequence is DDWSH. Residues 90-125 traverse the membrane as a helical segment; that stretch reads GDLSCQVCGILLYENIYISVGFLCCISIDRYLAVAH. At 126 to 133 the chain is on the cytoplasmic side; that stretch reads PFRFHQFR. Residues 134–160 form a helical membrane-spanning segment; that stretch reads TLKAAVGVSVLIWAKELLTSIYFLNHK. Residues 161–176 are Extracellular-facing; sequence EVIEDEDQHRVCFEHY. The segment at 161–176 is extracellular loop 2 (ECL2); it reads EVIEDEDQHRVCFEHY. A helical membrane pass occupies residues 177 to 214; it reads PIQAWQRSINYYRFLVGFLFPICLLLASYQGILRAVRR. Residues 215-218 lie on the Cytoplasmic side of the membrane; the sequence is SHGT. A helical membrane pass occupies residues 219–254; the sequence is QKSRKDQIQRLVLSTVVIFLACFLPYHVLLLVRSLW. The Extracellular portion of the chain corresponds to 255-260; it reads ERNCEF. The chain crosses the membrane as a helical span at residues 261-289; it reads AKSIFNVYHFSLLLTSFNCVADPVLYCFV. Residues 290-365 are Cytoplasmic-facing; the sequence is SETTHRDLAR…VGGPSTVGLA (76 aa).

Belongs to the G-protein coupled receptor 1 family. As to expression, expressed in the lung, testis, heart, brain, spleen, thymus, brown fat, small intestine, colon, peripheral blood leukocytes, macrophages, stomach, ovary and white fat but not in the liver, kidney, and skeletal muscle. Expression in the prostate is weak but detectable. Specifically expressed in endothelial cells of small-diameter resistance arteries.

Its subcellular location is the cell membrane. Activated by a network of residues that connects an extracellular-facing cavity to Glu-149, a conserved charged residue buried in the transmembrane core of the receptor. Protonation likely drives conformational changes in extracellular loop 2 (ECL2), which stabilizes movement of transmembrane 3 (TM3) and a series of rearrangements that connect the extracellular-facing cavity to Glu-149, a residue only conserved in proton-sensing G-protein coupled receptors. Activated in an allosteric manner by divalent metal ions at the extracellular surface following the order: Cd(2+) &gt; Co(2+) &gt; Ni(2+) &gt; Zn(2+) &gt; Fe(2+) &gt; Ca(2+) &gt; Mg(2+). Activated by ogerin (ZINC67740571), a selective GPR68 positive allosteric modulator. Inhibited by small molecule GPR68-I, decreasing inflammation in models of colitis. Functionally, proton-sensing G-protein coupled receptor activated by extracellular pH, which is required to monitor pH changes and generate adaptive reactions. The receptor is almost silent at pH 7.8 but fully activated at pH 6.8. Ligand binding causes a conformation change that triggers signaling via guanine nucleotide-binding proteins (G proteins) and modulates the activity of downstream effectors, such as phospholipase C. GPR68 is mainly coupled to G(q) G proteins and mediates production of diacylglycerol (DAG) and inositol 1,4,5-trisphosphate (IP3). Acts as a key mechanosensor of fluid shear stress and membrane stretch. Expressed in endothelial cells of small-diameter resistance arteries, where it mediates flow-induced dilation in response to shear stress. May represents an osteoblastic pH sensor regulating cell-mediated responses to acidosis in bone. Acts as a regulator of calcium-sensing receptor CASR in a seesaw manner: GPR68-mediated signaling inhibits CASR signaling in response to protons, while CASR inhibits GPR68 in presence of extracellular calcium. Also functions as a metastasis suppressor gene in prostate cancer. In Mus musculus (Mouse), this protein is G-protein coupled receptor 68.